The sequence spans 287 residues: Ribosomal RNA small subunit methyltransferase A (287 aa).

Positions 28, 30, 55, 77, 103, and 123 each coordinate S-adenosyl-L-methionine.

Belongs to the class I-like SAM-binding methyltransferase superfamily. rRNA adenine N(6)-methyltransferase family. RsmA subfamily.

It localises to the cytoplasm. It catalyses the reaction adenosine(1518)/adenosine(1519) in 16S rRNA + 4 S-adenosyl-L-methionine = N(6)-dimethyladenosine(1518)/N(6)-dimethyladenosine(1519) in 16S rRNA + 4 S-adenosyl-L-homocysteine + 4 H(+). Functionally, specifically dimethylates two adjacent adenosines (A1518 and A1519) in the loop of a conserved hairpin near the 3'-end of 16S rRNA in the 30S particle. May play a critical role in biogenesis of 30S subunits. The polypeptide is Ribosomal RNA small subunit methyltransferase A (Nitrobacter winogradskyi (strain ATCC 25391 / DSM 10237 / CIP 104748 / NCIMB 11846 / Nb-255)).